The sequence spans 1468 residues: Potassium channel K2 (1468 aa).

6 consecutive transmembrane segments (helical) span residues 48–68 (MIYIGIGILLKIILIIIYWIY), 146–165 (FNCYFCNTRDILYAIIWYIS), 185–209 (IYIYNILLILLSSSYIDLVMIIISY), 221–240 (LLIDVFFSSPSAFFFSRHFF), 246–264 (IDIYFLMGFLRIIKVFLNV), and 285–306 (IILGVLLLCNAFASTLYTIQGI). Positions 326–344 (YFYFSIISISTVGYGDIIP) form an intramembrane region, pore-forming. The chain crosses the membrane as a helical span at residues 351 to 368 (VICIFFIFWTFIWVPIQF). A disordered region spans residues 804–823 (TCARTNESHKNNRLRSRRSQ). Residues 814–823 (NNRLRSRRSQ) show a composition bias toward basic residues. Residues 1141-1185 (KSNKNSNNNNKCEQIKQLNNNLTFKKNEKKTKSNKQNTNDTLERR) are a coiled coil.

The protein resides in the membrane. Functionally, may be involved in transmembrane potassium transport at the subcellular level not affecting bulk potassium transport across the plasma membrane. In Plasmodium berghei (strain Anka), this protein is Potassium channel K2.